The sequence spans 212 residues: Leucine efflux protein (212 aa).

The next 6 membrane-spanning stretches (helical) occupy residues 12 to 32 (TYLV…LFVL), 49 to 69 (GVFI…ATLI), 71 to 91 (TTPI…LYLG), 122 to 142 (ILSL…VQFI), 153 to 173 (FFIL…FLII), and 188 to 208 (LAKV…ARLA).

The protein belongs to the Rht family.

It is found in the cell inner membrane. The catalysed reaction is L-leucine(in) + H(+)(out) = L-leucine(out) + H(+)(in). In terms of biological role, exporter of leucine. This chain is Leucine efflux protein (leuE), found in Shigella sonnei (strain Ss046).